A 175-amino-acid polypeptide reads, in one-letter code: Alpha-crystallin B chain (175 aa).

Residue M1 is modified to N-acetylmethionine. A Phosphoserine modification is found at S19. O-linked (GlcNAc) serine glycosylation is present at S41. 2 positions are modified to phosphoserine: S45 and S59. A sHSP domain is found at R56–E164. H83 provides a ligand contact to Zn(2+). K92 is subject to N6-acetyllysine. Residues H104, E106, H111, and H119 each contribute to the Zn(2+) site. The segment at V142–K175 is disordered. An N6-acetyllysine modification is found at K166. T170 carries an O-linked (GlcNAc) threonine glycan.

This sequence belongs to the small heat shock protein (HSP20) family. In terms of assembly, heteromer composed of three CRYAA and one CRYAB subunits. Aggregates with homologous proteins, including the small heat shock protein HSPB1, to form large heteromeric complexes. Inter-subunit bridging via zinc ions enhances stability, which is crucial as there is no protein turn over in the lens. Interacts with HSPBAP1 and TTN/titin. Interacts with TMEM109; in the cellular response to DNA damage. Interacts with DES; binds rapidly during early stages of DES filament assembly and a reduced binding seen in the later stages. Interacts with TMED10; the interaction mediates the translocation from the cytoplasm into the ERGIC (endoplasmic reticulum-Golgi intermediate compartment) and thereby secretion. Interacts with ATP6V1A and with MTOR, forming a ternary complex.

It is found in the cytoplasm. Its subcellular location is the nucleus. It localises to the secreted. The protein resides in the lysosome. Functionally, may contribute to the transparency and refractive index of the lens. Has chaperone-like activity, preventing aggregation of various proteins under a wide range of stress conditions. In lens epithelial cells, stabilizes the ATP6V1A protein, preventing its degradation by the proteasome. The sequence is that of Alpha-crystallin B chain (CRYAB) from Macaca fascicularis (Crab-eating macaque).